Reading from the N-terminus, the 211-residue chain is Protein-methionine-sulfoxide reductase heme-binding subunit MsrQ (211 aa).

Transmembrane regions (helical) follow at residues 10 to 30 (WLKV…AWAI), 82 to 102 (LWCF…ELGV), 116 to 136 (PYLT…FTST), 153 to 173 (FVYL…KIIS), and 178 to 198 (IYAG…LSLF).

Belongs to the MsrQ family. In terms of assembly, heterodimer of a catalytic subunit (MsrP) and a heme-binding subunit (MsrQ). It depends on FMN as a cofactor. Requires heme b as cofactor.

It is found in the cell inner membrane. In terms of biological role, part of the MsrPQ system that repairs oxidized periplasmic proteins containing methionine sulfoxide residues (Met-O), using respiratory chain electrons. Thus protects these proteins from oxidative-stress damage caused by reactive species of oxygen and chlorine generated by the host defense mechanisms. MsrPQ is essential for the maintenance of envelope integrity under bleach stress, rescuing a wide series of structurally unrelated periplasmic proteins from methionine oxidation, including the primary periplasmic chaperone SurA and the lipoprotein Pal. MsrQ provides electrons for reduction to the reductase catalytic subunit MsrP, using the quinone pool of the respiratory chain. The chain is Protein-methionine-sulfoxide reductase heme-binding subunit MsrQ from Escherichia coli (strain UTI89 / UPEC).